The sequence spans 277 residues: Thiazole synthase (277 aa).

K119 (schiff-base intermediate with DXP) is an active-site residue. Residues G180, 206–207 (AG), and 228–229 (NT) contribute to the 1-deoxy-D-xylulose 5-phosphate site.

It belongs to the ThiG family. In terms of assembly, homotetramer. Forms heterodimers with either ThiH or ThiS.

The protein resides in the plastid. The protein localises to the chloroplast. It catalyses the reaction [ThiS sulfur-carrier protein]-C-terminal-Gly-aminoethanethioate + 2-iminoacetate + 1-deoxy-D-xylulose 5-phosphate = [ThiS sulfur-carrier protein]-C-terminal Gly-Gly + 2-[(2R,5Z)-2-carboxy-4-methylthiazol-5(2H)-ylidene]ethyl phosphate + 2 H2O + H(+). It participates in cofactor biosynthesis; thiamine diphosphate biosynthesis. Catalyzes the rearrangement of 1-deoxy-D-xylulose 5-phosphate (DXP) to produce the thiazole phosphate moiety of thiamine. Sulfur is provided by the thiocarboxylate moiety of the carrier protein ThiS. In vitro, sulfur can be provided by H(2)S. The sequence is that of Thiazole synthase from Porphyra purpurea (Red seaweed).